The sequence spans 201 residues: Nucleoid occlusion factor SlmA (201 aa).

The HTH tetR-type domain maps to Lys14–Leu75. Positions Thr38–Phe57 form a DNA-binding region, H-T-H motif.

This sequence belongs to the nucleoid occlusion factor SlmA family. In terms of assembly, homodimer. Interacts with FtsZ.

It is found in the cytoplasm. Its subcellular location is the nucleoid. Its function is as follows. Required for nucleoid occlusion (NO) phenomenon, which prevents Z-ring formation and cell division over the nucleoid. Acts as a DNA-associated cell division inhibitor that binds simultaneously chromosomal DNA and FtsZ, and disrupts the assembly of FtsZ polymers. SlmA-DNA-binding sequences (SBS) are dispersed on non-Ter regions of the chromosome, preventing FtsZ polymerization at these regions. The sequence is that of Nucleoid occlusion factor SlmA from Glaesserella parasuis serovar 5 (strain SH0165) (Haemophilus parasuis).